The chain runs to 88 residues: Protein transport protein SBH2 (88 aa).

Residues 1-42 form a disordered region; it reads MAASVPPGGQRILQKRRQAQSIKEKQAKQTPTSTRQAGYGGS. Topologically, residues 1 to 61 are cytoplasmic; the sequence is MAASVPPGGQ…DEANGFRVDS (61 aa). The span at 28 to 42 shows a compositional bias: polar residues; that stretch reads KQTPTSTRQAGYGGS. A helical membrane pass occupies residues 62 to 82; it reads LVVLFLSVGFIFSVIALHLLT.

It belongs to the SEC61-beta family. As to quaternary structure, component of the heterotrimeric Ssh1 complex, which is composed of SSH1, SBH2 and SSS1.

The protein resides in the endoplasmic reticulum membrane. In terms of biological role, part of the Ssh1 complex, which probably is the major component of a channel-forming translocon complex that may function exclusively in the cotranslational pathway of protein endoplasmic reticulum (ER) import. This chain is Protein transport protein SBH2 (SBH2), found in Saccharomyces cerevisiae (strain ATCC 204508 / S288c) (Baker's yeast).